Consider the following 221-residue polypeptide: Large ribosomal subunit protein uL4 (221 aa).

The interval 44-102 (AARQGTHKVKRRGEVRGGGKKPYRQKGTGRARQGSTRAPQFAGGGVVHGPTPRDYSQRT) is disordered. Positions 61-72 (GGKKPYRQKGTG) are enriched in basic residues.

Belongs to the universal ribosomal protein uL4 family. In terms of assembly, part of the 50S ribosomal subunit.

In terms of biological role, one of the primary rRNA binding proteins, this protein initially binds near the 5'-end of the 23S rRNA. It is important during the early stages of 50S assembly. It makes multiple contacts with different domains of the 23S rRNA in the assembled 50S subunit and ribosome. Functionally, forms part of the polypeptide exit tunnel. This chain is Large ribosomal subunit protein uL4, found in Streptomyces avermitilis (strain ATCC 31267 / DSM 46492 / JCM 5070 / NBRC 14893 / NCIMB 12804 / NRRL 8165 / MA-4680).